The sequence spans 146 residues: Dual specificity phosphatase Cdc25 (146 aa).

The region spanning 34–135 (RRPNIAIIDV…WEASGKPVCR (102 aa)) is the Rhodanese domain. 45–48 (DEER) is a substrate binding site. His53 provides a ligand contact to Zn(2+). Residue 68-71 (KISH) participates in substrate binding. Residue Cys86 is the Cysteine persulfide intermediate of the active site. 90 to 92 (QVR) provides a ligand contact to substrate. Zn(2+) contacts are provided by Cys134, Cys136, and Cys141.

The protein belongs to the MPI phosphatase family. Expressed in roots and at lower levels in shoots (at protein level). Expressed in leaves, stems and flowers.

It is found in the nucleus. The catalysed reaction is O-phospho-L-tyrosyl-[protein] + H2O = L-tyrosyl-[protein] + phosphate. The enzyme catalyses [glutaredoxin]-dithiol + arsenate + glutathione + H(+) = glutathionyl-S-S-[glutaredoxin] + arsenite + H2O. Its activity is regulated as follows. Inhibited by NSC95397. In terms of biological role, tyrosine protein phosphatase that dephosphorylates CDK complex and activate its kinase activity in vitro. Arsenate reductase that plays a major role in the reduction of arsenate to arsenite and arsenic retention in roots. Has an in vitro and in vivo arsenate reductase activity. Plays no role in arsenic metabolism. This chain is Dual specificity phosphatase Cdc25, found in Arabidopsis thaliana (Mouse-ear cress).